A 66-amino-acid chain; its full sequence is Ornithorhynchus venom defensin-like peptide A (66 aa).

Residues 1–22 form the signal peptide; that stretch reads MRLTYLLLLLVAVLFQAGSGSA. Positions 23–24 are excised as a propeptide; sequence EP. 3 disulfides stabilise this stretch: C33–C63, C40–C56, and C48–C64.

Produced by the crural gland and detected in venom from the spur located on each male hind leg. Is the only OvDLP that is expressed in venom gland alone.

The protein resides in the secreted. Does not show antimicrobial, myotoxic, hemolytic and cell-promoting activities. In Ornithorhynchus anatinus (Duckbill platypus), this protein is Ornithorhynchus venom defensin-like peptide A.